The following is a 376-amino-acid chain: Quinolinate synthase (376 aa).

Residues His57 and Ser78 each contribute to the iminosuccinate site. Cys123 contacts [4Fe-4S] cluster. Residues 149-151 and Ser166 contribute to the iminosuccinate site; that span reads YAN. Cys210 serves as a coordination point for [4Fe-4S] cluster. Residues 236 to 238 and Thr253 contribute to the iminosuccinate site; that span reads HPE. Cys307 is a binding site for [4Fe-4S] cluster.

This sequence belongs to the quinolinate synthase family. Type 1 subfamily. Requires [4Fe-4S] cluster as cofactor.

It localises to the cytoplasm. It catalyses the reaction iminosuccinate + dihydroxyacetone phosphate = quinolinate + phosphate + 2 H2O + H(+). It participates in cofactor biosynthesis; NAD(+) biosynthesis; quinolinate from iminoaspartate: step 1/1. In terms of biological role, catalyzes the condensation of iminoaspartate with dihydroxyacetone phosphate to form quinolinate. This chain is Quinolinate synthase, found in Paraburkholderia phymatum (strain DSM 17167 / CIP 108236 / LMG 21445 / STM815) (Burkholderia phymatum).